Reading from the N-terminus, the 1131-residue chain is DNA-directed RNA polymerase subunit beta (1131 aa).

Positions 1108–1131 are disordered; it reads QLARRTPPRPTYESLSRESLDDDE. The span at 1122–1131 shows a compositional bias: basic and acidic residues; the sequence is LSRESLDDDE.

It belongs to the RNA polymerase beta chain family. In terms of assembly, in cyanobacteria the RNAP catalytic core is composed of 2 alpha, 1 beta, 1 beta', 1 gamma and 1 omega subunit. When a sigma factor is associated with the core the holoenzyme is formed, which can initiate transcription.

It carries out the reaction RNA(n) + a ribonucleoside 5'-triphosphate = RNA(n+1) + diphosphate. Its function is as follows. DNA-dependent RNA polymerase catalyzes the transcription of DNA into RNA using the four ribonucleoside triphosphates as substrates. The polypeptide is DNA-directed RNA polymerase subunit beta (Nostoc sp. (strain PCC 7120 / SAG 25.82 / UTEX 2576)).